Consider the following 178-residue polypeptide: Large ribosomal subunit protein bL17 (178 aa).

The protein belongs to the bacterial ribosomal protein bL17 family. Part of the 50S ribosomal subunit. Contacts protein L32.

This Lachnospira eligens (strain ATCC 27750 / DSM 3376 / VPI C15-48 / C15-B4) (Eubacterium eligens) protein is Large ribosomal subunit protein bL17.